We begin with the raw amino-acid sequence, 60 residues long: Large ribosomal subunit protein bL32 (60 aa).

Over residues 1-16 (MAVPRRKTSPSRRGMR) the composition is skewed to basic residues. Positions 1–60 (MAVPRRKTSPSRRGMRRSADAIKRPTYVEDKDSGELRRPHHLDLKTGMYKGRQVLKKKDS) are disordered. The span at 17-44 (RSADAIKRPTYVEDKDSGELRRPHHLDL) shows a compositional bias: basic and acidic residues.

The protein is Large ribosomal subunit protein bL32 of Rhodopseudomonas palustris (strain ATCC BAA-98 / CGA009).